A 517-amino-acid chain; its full sequence is GMP synthase [glutamine-hydrolyzing] (517 aa).

In terms of domain architecture, Glutamine amidotransferase type-1 spans 11 to 202; that stretch reads KIIVLDFGSQ…AFDVCEAKAN (192 aa). Cys-88 acts as the Nucleophile in catalysis. Active-site residues include His-176 and Glu-178. In terms of domain architecture, GMPS ATP-PPase spans 203-392; it reads WSMNDFIDMQ…LGMPEDLVWR (190 aa). 230-236 contacts ATP; it reads SGGVDSS.

Homodimer.

The enzyme catalyses XMP + L-glutamine + ATP + H2O = GMP + L-glutamate + AMP + diphosphate + 2 H(+). Its pathway is purine metabolism; GMP biosynthesis; GMP from XMP (L-Gln route): step 1/1. Its function is as follows. Catalyzes the synthesis of GMP from XMP. The chain is GMP synthase [glutamine-hydrolyzing] from Pediococcus pentosaceus (strain ATCC 25745 / CCUG 21536 / LMG 10740 / 183-1w).